The sequence spans 123 residues: Ferredoxin-5 (123 aa).

A 2Fe-2S ferredoxin-type domain is found at 2-119; it reads PNITFTSPIM…DVMVHFTGTP (118 aa). 4 residues coordinate [2Fe-2S] cluster: Cys42, Cys47, Cys50, and Cys102.

It belongs to the 2Fe2S plant-type ferredoxin family. It depends on [2Fe-2S] cluster as a cofactor.

Functionally, ferredoxins are iron-sulfur proteins that transfer electrons in a wide variety of metabolic reactions. This ferredoxin probably participates in nitrogen fixation. In Rhodobacter capsulatus (Rhodopseudomonas capsulata), this protein is Ferredoxin-5 (fdxD).